Here is a 490-residue protein sequence, read N- to C-terminus: UDP-N-acetylmuramyl-tripeptide synthetase (490 aa).

113-119 (GTDGKTT) is a binding site for ATP. UDP-N-acetyl-alpha-D-muramoyl-L-alanyl-D-glutamate-binding positions include 158-159 (TT), serine 185, and arginine 193. Lysine 225 bears the N6-carboxylysine mark.

It belongs to the MurCDEF family. MurE subfamily. Carboxylation is probably crucial for Mg(2+) binding and, consequently, for the gamma-phosphate positioning of ATP.

It is found in the cytoplasm. Its pathway is cell wall biogenesis; peptidoglycan biosynthesis. Functionally, catalyzes the addition of an amino acid to the nucleotide precursor UDP-N-acetylmuramoyl-L-alanyl-D-glutamate (UMAG) in the biosynthesis of bacterial cell-wall peptidoglycan. The polypeptide is UDP-N-acetylmuramyl-tripeptide synthetase (Deinococcus radiodurans (strain ATCC 13939 / DSM 20539 / JCM 16871 / CCUG 27074 / LMG 4051 / NBRC 15346 / NCIMB 9279 / VKM B-1422 / R1)).